A 434-amino-acid polypeptide reads, in one-letter code: Serine hydroxymethyltransferase (434 aa).

(6S)-5,6,7,8-tetrahydrofolate contacts are provided by residues Leu-133 and 137-139; that span reads GHL. An N6-(pyridoxal phosphate)lysine modification is found at Lys-242. 366-368 contributes to the (6S)-5,6,7,8-tetrahydrofolate binding site; sequence SPF.

It belongs to the SHMT family. In terms of assembly, homodimer. It depends on pyridoxal 5'-phosphate as a cofactor.

It localises to the cytoplasm. The catalysed reaction is (6R)-5,10-methylene-5,6,7,8-tetrahydrofolate + glycine + H2O = (6S)-5,6,7,8-tetrahydrofolate + L-serine. The protein operates within one-carbon metabolism; tetrahydrofolate interconversion. It functions in the pathway amino-acid biosynthesis; glycine biosynthesis; glycine from L-serine: step 1/1. Catalyzes the reversible interconversion of serine and glycine with tetrahydrofolate (THF) serving as the one-carbon carrier. This reaction serves as the major source of one-carbon groups required for the biosynthesis of purines, thymidylate, methionine, and other important biomolecules. Also exhibits THF-independent aldolase activity toward beta-hydroxyamino acids, producing glycine and aldehydes, via a retro-aldol mechanism. The polypeptide is Serine hydroxymethyltransferase (Erythrobacter litoralis (strain HTCC2594)).